Here is a 368-residue protein sequence, read N- to C-terminus: tRNA-specific 2-thiouridylase MnmA (368 aa).

ATP-binding positions include 11–18 (GMSGGVDS) and methionine 37. The segment at 97–99 (NPD) is interaction with target base in tRNA. Cysteine 102 functions as the Nucleophile in the catalytic mechanism. Cysteine 102 and cysteine 199 are joined by a disulfide. Glycine 127 serves as a coordination point for ATP. Residues 149 to 151 (KDQ) are interaction with tRNA. Residue cysteine 199 is the Cysteine persulfide intermediate of the active site. An interaction with tRNA region spans residues 311–312 (RY).

It belongs to the MnmA/TRMU family. In terms of assembly, interacts with TusE.

The protein localises to the cytoplasm. It carries out the reaction S-sulfanyl-L-cysteinyl-[protein] + uridine(34) in tRNA + AH2 + ATP = 2-thiouridine(34) in tRNA + L-cysteinyl-[protein] + A + AMP + diphosphate + H(+). Functionally, catalyzes the 2-thiolation of uridine at the wobble position (U34) of tRNA(Lys), tRNA(Glu) and tRNA(Gln), leading to the formation of s(2)U34, the first step of tRNA-mnm(5)s(2)U34 synthesis. Sulfur is provided by IscS, via a sulfur-relay system. Binds ATP and its substrate tRNAs. This Salmonella choleraesuis (strain SC-B67) protein is tRNA-specific 2-thiouridylase MnmA.